Here is a 326-residue protein sequence, read N- to C-terminus: Biotin synthase (326 aa).

The Radical SAM core domain occupies N42–A266. The [4Fe-4S] cluster site is built by C57, C61, and C64. Residues C101, C132, C192, and R264 each coordinate [2Fe-2S] cluster.

This sequence belongs to the radical SAM superfamily. Biotin synthase family. Homodimer. Requires [4Fe-4S] cluster as cofactor. [2Fe-2S] cluster is required as a cofactor.

The catalysed reaction is (4R,5S)-dethiobiotin + (sulfur carrier)-SH + 2 reduced [2Fe-2S]-[ferredoxin] + 2 S-adenosyl-L-methionine = (sulfur carrier)-H + biotin + 2 5'-deoxyadenosine + 2 L-methionine + 2 oxidized [2Fe-2S]-[ferredoxin]. Its pathway is cofactor biosynthesis; biotin biosynthesis; biotin from 7,8-diaminononanoate: step 2/2. In terms of biological role, catalyzes the conversion of dethiobiotin (DTB) to biotin by the insertion of a sulfur atom into dethiobiotin via a radical-based mechanism. The chain is Biotin synthase from Ehrlichia chaffeensis (strain ATCC CRL-10679 / Arkansas).